A 335-amino-acid chain; its full sequence is Adenosine deaminase (335 aa).

Zn(2+)-binding residues include His12 and His14. Substrate-binding residues include His14 and Asp16. Zn(2+) is bound at residue His197. Residue Glu200 is the Proton donor of the active site. Residue Asp278 participates in Zn(2+) binding.

This sequence belongs to the metallo-dependent hydrolases superfamily. Adenosine and AMP deaminases family. Adenosine deaminase subfamily. The cofactor is Zn(2+).

The catalysed reaction is adenosine + H2O + H(+) = inosine + NH4(+). It catalyses the reaction 2'-deoxyadenosine + H2O + H(+) = 2'-deoxyinosine + NH4(+). Its function is as follows. Catalyzes the hydrolytic deamination of adenosine and 2-deoxyadenosine. The polypeptide is Adenosine deaminase (Clostridium botulinum (strain Langeland / NCTC 10281 / Type F)).